The primary structure comprises 655 residues: DNA topoisomerase 4 subunit B (655 aa).

ATP contacts are provided by residues Y9, N49, D76, 116–122, and K340; that span reads GLHGVGA. A compositionally biased stretch (basic and acidic residues) spans 387–397; the sequence is AARKAREEARS. Residues 387–419 form a disordered region; the sequence is AARKAREEARSGKKRKKSEATLSGKLTPAGSRN. The Toprim domain occupies 423–537; sequence NELYLVEGDS…HGKVFIALPP (115 aa). Residues E429, D502, and D504 each contribute to the Mg(2+) site.

It belongs to the type II topoisomerase family. ParE type 2 subfamily. As to quaternary structure, heterotetramer composed of ParC and ParE. Requires Mg(2+) as cofactor. The cofactor is Mn(2+). Ca(2+) serves as cofactor.

The catalysed reaction is ATP-dependent breakage, passage and rejoining of double-stranded DNA.. Functionally, topoisomerase IV is essential for chromosome segregation. It relaxes supercoiled DNA. Performs the decatenation events required during the replication of a circular DNA molecule. The chain is DNA topoisomerase 4 subunit B from Bacillus subtilis (strain 168).